Consider the following 107-residue polypeptide: Large ribosomal subunit protein uL24 (107 aa).

Belongs to the universal ribosomal protein uL24 family. In terms of assembly, part of the 50S ribosomal subunit.

One of two assembly initiator proteins, it binds directly to the 5'-end of the 23S rRNA, where it nucleates assembly of the 50S subunit. Its function is as follows. One of the proteins that surrounds the polypeptide exit tunnel on the outside of the subunit. The protein is Large ribosomal subunit protein uL24 of Mesomycoplasma hyopneumoniae (strain 7448) (Mycoplasma hyopneumoniae).